Reading from the N-terminus, the 94-residue chain is Acylphosphatase (94 aa).

The region spanning R3 to Y90 is the Acylphosphatase-like domain. Residues R18 and N36 contribute to the active site.

Belongs to the acylphosphatase family.

It catalyses the reaction an acyl phosphate + H2O = a carboxylate + phosphate + H(+). This chain is Acylphosphatase (acyP), found in Geobacillus thermodenitrificans (strain NG80-2).